The chain runs to 353 residues: Putative 3-oxoacyl-[acyl-carrier-protein] synthase 3 (353 aa).

Residues Cys-122, His-268, and Asn-299 contribute to the active site.

It belongs to the thiolase-like superfamily. FabH family. Homodimer.

It is found in the cytoplasm. The catalysed reaction is malonyl-[ACP] + acetyl-CoA + H(+) = 3-oxobutanoyl-[ACP] + CO2 + CoA. It participates in lipid metabolism; fatty acid biosynthesis. Functionally, may catalyze the condensation reaction of fatty acid synthesis by the addition to an acyl acceptor of two carbons from malonyl-ACP. This is Putative 3-oxoacyl-[acyl-carrier-protein] synthase 3 from Campylobacter jejuni subsp. jejuni serotype O:2 (strain ATCC 700819 / NCTC 11168).